The primary structure comprises 171 residues: NADH-quinone oxidoreductase subunit B 2 (171 aa).

[4Fe-4S] cluster-binding residues include Cys37, Cys38, Cys102, and Cys132.

Belongs to the complex I 20 kDa subunit family. In terms of assembly, NDH-1 is composed of 14 different subunits. Subunits NuoB, C, D, E, F, and G constitute the peripheral sector of the complex. It depends on [4Fe-4S] cluster as a cofactor.

It is found in the cell inner membrane. It catalyses the reaction a quinone + NADH + 5 H(+)(in) = a quinol + NAD(+) + 4 H(+)(out). In terms of biological role, NDH-1 shuttles electrons from NADH, via FMN and iron-sulfur (Fe-S) centers, to quinones in the respiratory chain. Couples the redox reaction to proton translocation (for every two electrons transferred, four hydrogen ions are translocated across the cytoplasmic membrane), and thus conserves the redox energy in a proton gradient. The chain is NADH-quinone oxidoreductase subunit B 2 from Chromobacterium violaceum (strain ATCC 12472 / DSM 30191 / JCM 1249 / CCUG 213 / NBRC 12614 / NCIMB 9131 / NCTC 9757 / MK).